Reading from the N-terminus, the 266-residue chain is Undecaprenyl-diphosphatase (266 aa).

7 consecutive transmembrane segments (helical) span residues 39 to 59 (PGAS…AYYF), 86 to 106 (SIFI…IFIP), 112 to 132 (VLRS…FMYL), 147 to 167 (NFSN…PGVS), 189 to 209 (FSFL…FVSS), 216 to 236 (LGFF…LLAI), and 246 to 266 (NGLK…LLNL).

It belongs to the UppP family.

The protein resides in the cell inner membrane. It catalyses the reaction di-trans,octa-cis-undecaprenyl diphosphate + H2O = di-trans,octa-cis-undecaprenyl phosphate + phosphate + H(+). Functionally, catalyzes the dephosphorylation of undecaprenyl diphosphate (UPP). Confers resistance to bacitracin. The chain is Undecaprenyl-diphosphatase from Prochlorococcus marinus (strain MIT 9301).